Here is a 203-residue protein sequence, read N- to C-terminus: High frequency lysogenization protein HflD homolog (203 aa).

It belongs to the HflD family.

The protein resides in the cytoplasm. It localises to the cell inner membrane. The polypeptide is High frequency lysogenization protein HflD homolog (Vesicomyosocius okutanii subsp. Calyptogena okutanii (strain HA)).